The following is a 389-amino-acid chain: 26S proteasome regulatory subunit 6B homolog (389 aa).

175–182 (GPPGTGKT) is a binding site for ATP.

It belongs to the AAA ATPase family.

It localises to the cytoplasm. The protein localises to the nucleus. Functionally, the 26S proteasome is involved in the ATP-dependent degradation of ubiquitinated proteins. The regulatory (or ATPase) complex confers ATP dependency and substrate specificity to the 26S complex. The chain is 26S proteasome regulatory subunit 6B homolog (rpt3) from Schizosaccharomyces pombe (strain 972 / ATCC 24843) (Fission yeast).